Consider the following 127-residue polypeptide: Aspartate 1-decarboxylase (127 aa).

S25 acts as the Schiff-base intermediate with substrate; via pyruvic acid in catalysis. At S25 the chain carries Pyruvic acid (Ser). T57 serves as a coordination point for substrate. Residue Y58 is the Proton donor of the active site. 73-75 (GAA) contacts substrate.

The protein belongs to the PanD family. As to quaternary structure, heterooctamer of four alpha and four beta subunits. The cofactor is pyruvate. Is synthesized initially as an inactive proenzyme, which is activated by self-cleavage at a specific serine bond to produce a beta-subunit with a hydroxyl group at its C-terminus and an alpha-subunit with a pyruvoyl group at its N-terminus.

Its subcellular location is the cytoplasm. The catalysed reaction is L-aspartate + H(+) = beta-alanine + CO2. The protein operates within cofactor biosynthesis; (R)-pantothenate biosynthesis; beta-alanine from L-aspartate: step 1/1. Its function is as follows. Catalyzes the pyruvoyl-dependent decarboxylation of aspartate to produce beta-alanine. This Exiguobacterium sibiricum (strain DSM 17290 / CCUG 55495 / CIP 109462 / JCM 13490 / 255-15) protein is Aspartate 1-decarboxylase.